An 892-amino-acid chain; its full sequence is Alanine--tRNA ligase (892 aa).

Residues His574, His578, Cys676, and His680 each contribute to the Zn(2+) site.

This sequence belongs to the class-II aminoacyl-tRNA synthetase family. Zn(2+) serves as cofactor.

It is found in the cytoplasm. It catalyses the reaction tRNA(Ala) + L-alanine + ATP = L-alanyl-tRNA(Ala) + AMP + diphosphate. Its function is as follows. Catalyzes the attachment of alanine to tRNA(Ala) in a two-step reaction: alanine is first activated by ATP to form Ala-AMP and then transferred to the acceptor end of tRNA(Ala). Also edits incorrectly charged Ser-tRNA(Ala) and Gly-tRNA(Ala) via its editing domain. The sequence is that of Alanine--tRNA ligase from Prochlorococcus marinus (strain MIT 9313).